We begin with the raw amino-acid sequence, 331 residues long: Ketol-acid reductoisomerase (NADP(+)) (331 aa).

One can recognise a KARI N-terminal Rossmann domain in the interval 2–182 (AKMYYDKDAD…GGTRAGVIET (181 aa)). NADP(+)-binding positions include 25–28 (FGSQ), serine 51, serine 53, and 83–86 (DEKQ). The active site involves histidine 108. Residue glycine 134 coordinates NADP(+). Positions 183 to 328 (TFKEETETDL…KGLREMMAWI (146 aa)) constitute a KARI C-terminal knotted domain. The Mg(2+) site is built by aspartate 191, glutamate 195, glutamate 227, and glutamate 231. Position 252 (serine 252) interacts with substrate.

Belongs to the ketol-acid reductoisomerase family. Requires Mg(2+) as cofactor.

The catalysed reaction is (2R)-2,3-dihydroxy-3-methylbutanoate + NADP(+) = (2S)-2-acetolactate + NADPH + H(+). It carries out the reaction (2R,3R)-2,3-dihydroxy-3-methylpentanoate + NADP(+) = (S)-2-ethyl-2-hydroxy-3-oxobutanoate + NADPH + H(+). It functions in the pathway amino-acid biosynthesis; L-isoleucine biosynthesis; L-isoleucine from 2-oxobutanoate: step 2/4. It participates in amino-acid biosynthesis; L-valine biosynthesis; L-valine from pyruvate: step 2/4. In terms of biological role, involved in the biosynthesis of branched-chain amino acids (BCAA). Catalyzes an alkyl-migration followed by a ketol-acid reduction of (S)-2-acetolactate (S2AL) to yield (R)-2,3-dihydroxy-isovalerate. In the isomerase reaction, S2AL is rearranged via a Mg-dependent methyl migration to produce 3-hydroxy-3-methyl-2-ketobutyrate (HMKB). In the reductase reaction, this 2-ketoacid undergoes a metal-dependent reduction by NADPH to yield (R)-2,3-dihydroxy-isovalerate. In Thermoanaerobacter sp. (strain X514), this protein is Ketol-acid reductoisomerase (NADP(+)).